We begin with the raw amino-acid sequence, 334 residues long: Leucine carboxyl methyltransferase 1 (334 aa).

S-adenosyl-L-methionine contacts are provided by residues K37, R73, G98, D122, 171-172 (DL), and E198.

It belongs to the methyltransferase superfamily. LCMT family.

The catalysed reaction is [phosphatase 2A protein]-C-terminal L-leucine + S-adenosyl-L-methionine = [phosphatase 2A protein]-C-terminal L-leucine methyl ester + S-adenosyl-L-homocysteine. In terms of biological role, methylates the carboxyl group of the C-terminal leucine residue of protein phosphatase 2A catalytic subunits to form alpha-leucine ester residues. The chain is Leucine carboxyl methyltransferase 1 (LCMT1) from Homo sapiens (Human).